A 471-amino-acid chain; its full sequence is Uronate isomerase (471 aa).

This sequence belongs to the metallo-dependent hydrolases superfamily. Uronate isomerase family.

It carries out the reaction D-glucuronate = D-fructuronate. The enzyme catalyses aldehydo-D-galacturonate = keto-D-tagaturonate. It functions in the pathway carbohydrate metabolism; pentose and glucuronate interconversion. The chain is Uronate isomerase from Latilactobacillus sakei subsp. sakei (strain 23K) (Lactobacillus sakei subsp. sakei).